Here is a 113-residue protein sequence, read N- to C-terminus: uncharacterized protein (113 aa).

This sequence to M.jannaschii MJ0886 C-terminal region.

This is an uncharacterized protein from Clostridium pasteurianum.